A 282-amino-acid chain; its full sequence is Armadillo repeat-containing protein 1 (282 aa).

Met-1 is modified (N-acetylmethionine). One copy of the ARM repeat lies at 39–81; it reads GCLPGLILFMDHPNPPVVHSALLALRYLAECRANREKMKGELG. Phosphothreonine is present on Thr-137. Phosphoserine occurs at positions 189, 246, 260, and 267. Residues 239 to 261 are disordered; sequence DYLPEDESPTKEQDKAVSRVGSH. Residues 246–255 show a composition bias toward basic and acidic residues; sequence SPTKEQDKAV.

In terms of assembly, interacts with mitochondrial contact site and cristae organizing system (MICOS) complex components IMMT/MIC60 and MICOS10/MIC10. Interacts with mitochondrial outer membrane sorting assembly machinery (SAM) complex components SAMM50 and MTX1.

The protein resides in the cytoplasm. The protein localises to the mitochondrion. It is found in the mitochondrion outer membrane. Its function is as follows. In association with mitochondrial contact site and cristae organizing system (MICOS) complex components and mitochondrial outer membrane sorting assembly machinery (SAM) complex components may regulate mitochondrial dynamics playing a role in determining mitochondrial length, distribution and motility. The sequence is that of Armadillo repeat-containing protein 1 (ARMC1) from Bos taurus (Bovine).